Consider the following 715-residue polypeptide: Inducible lysine decarboxylase (715 aa).

Position 367 is an N6-(pyridoxal phosphate)lysine (Lys-367).

It belongs to the Orn/Lys/Arg decarboxylase class-I family. In terms of assembly, homodecamer. Interacts with RavA. Pyridoxal 5'-phosphate serves as cofactor.

The protein localises to the cytoplasm. The catalysed reaction is L-lysine + H(+) = cadaverine + CO2. The protein is Inducible lysine decarboxylase (cadA) of Escherichia coli O157:H7.